The sequence spans 623 residues: Zinc finger protein 131 (623 aa).

The BTB domain occupies 34 to 98; it reads TDITLIVDGH…TYTAKLMIQG (65 aa). Residues 137-148 carry the Nuclear localization signal 1 motif; sequence TGKNEAKKRKIA. 3 consecutive C2H2-type zinc fingers follow at residues 261 to 283, 288 to 311, and 328 to 350; these read FHCEKCNRSFKLFYHFKEHMKSH, FKCEICNKRYLRESAWKQHLNCYH, and HVCQYCEKQFDHFGHFKEHLRKH. Glycyl lysine isopeptide (Lys-Gly) (interchain with G-Cter in SUMO2) cross-links involve residues Lys-289 and Lys-295. Positions 317 to 328 match the Nuclear localization signal 2 motif; the sequence is VSKKQRTGKKIH. The segment at 356–381 adopts a C2H2-type 4; degenerate zinc-finger fold; the sequence is FECPNCHERFARNSTLKCHLTACQTG. 2 consecutive C2H2-type zinc fingers follow at residues 392 to 414 and 420 to 443; these read YECQVCNSVFNSWDQFKDHLVIH and NHCTLCDLWFMQGNELRRHLSDAH. Residues 573–617 show a composition bias toward basic and acidic residues; that stretch reads NQEERESSQADAAEAAREDHEDAEDLETKPTVDSEAEKAENEDRT. The disordered stretch occupies residues 573-623; the sequence is NQEERESSQADAAEAAREDHEDAEDLETKPTVDSEAEKAENEDRTALPVLE. A Glycyl lysine isopeptide (Lys-Gly) (interchain with G-Cter in SUMO) cross-link involves residue Lys-601.

It belongs to the krueppel C2H2-type zinc-finger protein family. Monosumoylated at Lys-601 by CBX4 and UHRF2. Sumoylation may potentiate ZNF131 inhibition of estrogen signaling. Sumoylation does not interfere with ubiquitination. Post-translationally, ubiquitinated. Predominant expression is found in different brain areas such as the occipital and temporal lobe, the nucleus caudatus, hippocampus, and the cerebellum as well as in testis and thymus.

It localises to the nucleus. In terms of biological role, plays a role during development and organogenesis as well as in the function of the adult central nervous system. May be involved in transcriptional regulation as a repressor of ESR1/ER-alpha signaling. This is Zinc finger protein 131 (ZNF131) from Homo sapiens (Human).